Consider the following 620-residue polypeptide: Glutathione-regulated potassium-efflux system protein KefC (620 aa).

At 1 to 3 the chain is on the periplasmic side; the sequence is MDS. Residues 4-24 form a helical membrane-spanning segment; it reads HTLVQALIYLGSAALIVPIAV. A topological domain (cytoplasmic) is located at residue Arg-25. Residues 26 to 46 form a helical membrane-spanning segment; it reads LGLGSVLGYLIAGCIIGPWGL. The Periplasmic portion of the chain corresponds to 47-53; sequence RLVTDAE. A helical transmembrane segment spans residues 54–74; that stretch reads SILHFAEIGVVLMLFIIGLEL. At 75-89 the chain is on the cytoplasmic side; it reads DPQRLWKLRAAVFGG. Residues 90–110 traverse the membrane as a helical segment; sequence GALQMVICGGLLGLFCMLLGL. Over 111 to 113 the chain is Periplasmic; the sequence is RWQ. Residues 114–134 form a helical membrane-spanning segment; that stretch reads VAELIGMTLALSSTAIAMQAM. Over 135–148 the chain is Cytoplasmic; sequence NERNLMVTQMGRSA. Residues 149-169 traverse the membrane as a helical segment; sequence FAVLLFQDIAAIPLVAMIPLL. Residues 170–177 are Periplasmic-facing; it reads AASSASTT. Residues 178-198 traverse the membrane as a helical segment; it reads MGAFALSALKVAGALVLVVLL. Topologically, residues 199-213 are cytoplasmic; sequence GRYVTRPALRFVARS. The helical transmembrane segment at 214 to 233 threads the bilayer; that stretch reads GLREVFSAVALFLVFGFGLL. Topologically, residues 234 to 236 are periplasmic; that stretch reads LEE. A helical transmembrane segment spans residues 237–254; the sequence is VGLSMAMGAFLAGVLLAS. The Cytoplasmic segment spans residues 255 to 269; it reads SEYRHALESDIEPFK. The helical transmembrane segment at 270–290 threads the bilayer; the sequence is GLLLGLFFIGVGMSIDFGTLI. Over 291 to 293 the chain is Periplasmic; that stretch reads ENP. Residues 294–314 traverse the membrane as a helical segment; that stretch reads LRIVILLLGFLIIKIAMLWLI. Residues 315 to 326 lie on the Cytoplasmic side of the membrane; it reads ARPLQVPNKQRR. Residues 327–347 traverse the membrane as a helical segment; the sequence is WFAVLLGQGSEFAFVVFGAAQ. Residues 348-358 lie on the Periplasmic side of the membrane; that stretch reads MANVLEPEWAK. Residues 359 to 379 form a helical membrane-spanning segment; it reads SLTLAVALSMAATPILLVILN. At 380-620 the chain is on the cytoplasmic side; sequence RLEQSSTEEA…ADEPETKPSS (241 aa). Residues 399–518 enclose the RCK N-terminal domain; the sequence is QPRVIIAGFG…AGVEKPERET (120 aa). The interval 597 to 620 is disordered; it reads GWQGTEEGKHTGNMADEPETKPSS.

The protein belongs to the monovalent cation:proton antiporter 2 (CPA2) transporter (TC 2.A.37) family. KefC subfamily. As to quaternary structure, homodimer. Interacts with the regulatory subunit KefF.

The protein localises to the cell inner membrane. Pore-forming subunit of a potassium efflux system that confers protection against electrophiles. Catalyzes K(+)/H(+) antiport. The chain is Glutathione-regulated potassium-efflux system protein KefC from Shigella flexneri.